A 311-amino-acid chain; its full sequence is MTEIDFDIAIIGAGPAGMTAAVYASRANLKTVMIERGIPGGQMANTEEVENFPGFEMITGPDLSTKMFEHAKKFGAVYQYGDIKSVEDKGEYKVINFGNKELTAKAVIIATGAEYKKIGVPGEQELGGRGVSYCAVCDGAFFKNKRLFVIGGGDSAVEEGTFLTKFADKVTIVHRRDELRAQRILQDRAFKNDKIDFIWSHTLKSINEKDGKVGSVTLTSTKDGSEETHEADGVFIYIGMKPLTAPFKDLGITNDVGYIVTKDDMTTSVPGIFAAGDVRDKGLRQIVTATGDGSIAAQSAAEYIEHLNDQA.

35-42 (ERGIPGGQ) provides a ligand contact to FAD. Residues Cys-134 and Cys-137 are joined by a disulfide bond. 277–286 (DVRDKGLRQI) contributes to the FAD binding site.

It belongs to the class-II pyridine nucleotide-disulfide oxidoreductase family. Homodimer. Requires FAD as cofactor.

It localises to the cytoplasm. It catalyses the reaction [thioredoxin]-dithiol + NADP(+) = [thioredoxin]-disulfide + NADPH + H(+). The protein is Thioredoxin reductase (trxB) of Staphylococcus aureus (strain COL).